A 351-amino-acid polypeptide reads, in one-letter code: Inactive RHOMBOID-like protein 8 (351 aa).

7 helical membrane-spanning segments follow: residues 48–68 (TWLV…TMGV), 130–150 (WLHS…FVGI), 160–180 (RIAV…VLFV), 183–203 (IPSI…LSAL), 216–236 (ALAI…LPFI), 239–259 (FANI…LFKP), and 294–314 (IICL…ACWG).

This sequence belongs to the peptidase S54 family. Expressed in pollen mother cell.

It is found in the golgi apparatus membrane. Its function is as follows. Probable inactive rhomboid-type serine protease. Probably essential for the meiosis stage-specific callose accumulation and pollen exine formation. The protein is Inactive RHOMBOID-like protein 8 of Arabidopsis thaliana (Mouse-ear cress).